Consider the following 368-residue polypeptide: UDP-N-acetylglucosamine--N-acetylmuramyl-(pentapeptide) pyrophosphoryl-undecaprenol N-acetylglucosamine transferase (368 aa).

UDP-N-acetyl-alpha-D-glucosamine-binding positions include 10–12, Asn128, Arg170, Ser199, Ile250, and Gln295; that span reads TGG.

The protein belongs to the glycosyltransferase 28 family. MurG subfamily.

Its subcellular location is the cell inner membrane. It carries out the reaction di-trans,octa-cis-undecaprenyl diphospho-N-acetyl-alpha-D-muramoyl-L-alanyl-D-glutamyl-meso-2,6-diaminopimeloyl-D-alanyl-D-alanine + UDP-N-acetyl-alpha-D-glucosamine = di-trans,octa-cis-undecaprenyl diphospho-[N-acetyl-alpha-D-glucosaminyl-(1-&gt;4)]-N-acetyl-alpha-D-muramoyl-L-alanyl-D-glutamyl-meso-2,6-diaminopimeloyl-D-alanyl-D-alanine + UDP + H(+). The protein operates within cell wall biogenesis; peptidoglycan biosynthesis. Cell wall formation. Catalyzes the transfer of a GlcNAc subunit on undecaprenyl-pyrophosphoryl-MurNAc-pentapeptide (lipid intermediate I) to form undecaprenyl-pyrophosphoryl-MurNAc-(pentapeptide)GlcNAc (lipid intermediate II). This Chlorobium phaeovibrioides (strain DSM 265 / 1930) (Prosthecochloris vibrioformis (strain DSM 265)) protein is UDP-N-acetylglucosamine--N-acetylmuramyl-(pentapeptide) pyrophosphoryl-undecaprenol N-acetylglucosamine transferase.